A 161-amino-acid chain; its full sequence is DNA-directed RNA polymerase 18 kDa subunit (161 aa).

This sequence belongs to the poxviridae DNA-directed RNA polymerase 18 kDa subunit family. The DNA-dependent RNA polymerase used for intermediate and late genes expression consists of eight subunits Rpo30/OPG66, Rpo7/OPG90, Rpo22/OPG103, Rpo147/OPG105, Rpo18/OPG119, Rpo19/OPG131, Rpo132/OPG151 and Rpo35/OPG156. The same holoenzyme, with the addition of the transcription-specificity factor OPG109, is used for early gene expression. Post-translationally, apparently non-glycosylated.

The protein resides in the virion. It carries out the reaction RNA(n) + a ribonucleoside 5'-triphosphate = RNA(n+1) + diphosphate. Functionally, part of the DNA-dependent RNA polymerase which catalyzes the transcription of viral DNA into RNA using the four ribonucleoside triphosphates as substrates. Responsible for the transcription of early, intermediate and late genes. DNA-dependent RNA polymerase associates with the early transcription factor (ETF), itself composed of OPG118 and OPG133, thereby allowing the early genes transcription. Late transcription, and probably also intermediate transcription, require newly synthesized RNA polymerase. This Cynomys gunnisoni (Gunnison's prairie dog) protein is DNA-directed RNA polymerase 18 kDa subunit (OPG119).